A 396-amino-acid polypeptide reads, in one-letter code: Phosphoglycerate kinase (396 aa).

Residues aspartate 19–asparagine 21, arginine 34, histidine 57–lysine 60, arginine 116, and arginine 153 each bind substrate. Residues lysine 204, glutamate 324, and glycine 351–threonine 354 each bind ATP.

The protein belongs to the phosphoglycerate kinase family. In terms of assembly, monomer.

The protein localises to the cytoplasm. It catalyses the reaction (2R)-3-phosphoglycerate + ATP = (2R)-3-phospho-glyceroyl phosphate + ADP. The protein operates within carbohydrate degradation; glycolysis; pyruvate from D-glyceraldehyde 3-phosphate: step 2/5. The chain is Phosphoglycerate kinase from Maridesulfovibrio salexigens (strain ATCC 14822 / DSM 2638 / NCIMB 8403 / VKM B-1763) (Desulfovibrio salexigens).